The chain runs to 54 residues: MLLEHVTITLLNNTSFALLPEAYAPFDPLIDVLPIIPLLFLLLAFVWQASVKFR.

Positions 1–17 (MLLEHVTITLLNNTSFA) are excised as a propeptide. A helical transmembrane segment spans residues 29–49 (LIDVLPIIPLLFLLLAFVWQA).

This sequence belongs to the PsbK family. In terms of assembly, PSII is composed of 1 copy each of membrane proteins PsbA, PsbB, PsbC, PsbD, PsbE, PsbF, PsbH, PsbI, PsbJ, PsbK, PsbL, PsbM, PsbT, PsbY, PsbZ, Psb30/Ycf12, at least 3 peripheral proteins of the oxygen-evolving complex and a large number of cofactors. It forms dimeric complexes.

Its subcellular location is the plastid. The protein resides in the chloroplast thylakoid membrane. One of the components of the core complex of photosystem II (PSII). PSII is a light-driven water:plastoquinone oxidoreductase that uses light energy to abstract electrons from H(2)O, generating O(2) and a proton gradient subsequently used for ATP formation. It consists of a core antenna complex that captures photons, and an electron transfer chain that converts photonic excitation into a charge separation. The polypeptide is Photosystem II reaction center protein K (Euglena mutabilis).